Reading from the N-terminus, the 100-residue chain is Urease subunit gamma (100 aa).

This sequence belongs to the urease gamma subunit family. As to quaternary structure, heterotrimer of UreA (gamma), UreB (beta) and UreC (alpha) subunits. Three heterotrimers associate to form the active enzyme.

The protein localises to the cytoplasm. The enzyme catalyses urea + 2 H2O + H(+) = hydrogencarbonate + 2 NH4(+). It participates in nitrogen metabolism; urea degradation; CO(2) and NH(3) from urea (urease route): step 1/1. The chain is Urease subunit gamma from Synechocystis sp. (strain ATCC 27184 / PCC 6803 / Kazusa).